The chain runs to 285 residues: Bifunctional protein FolD (285 aa).

NADP(+) contacts are provided by residues 165-167 and Ile-232; that span reads GAS.

Belongs to the tetrahydrofolate dehydrogenase/cyclohydrolase family. Homodimer.

It catalyses the reaction (6R)-5,10-methylene-5,6,7,8-tetrahydrofolate + NADP(+) = (6R)-5,10-methenyltetrahydrofolate + NADPH. The catalysed reaction is (6R)-5,10-methenyltetrahydrofolate + H2O = (6R)-10-formyltetrahydrofolate + H(+). The protein operates within one-carbon metabolism; tetrahydrofolate interconversion. Its function is as follows. Catalyzes the oxidation of 5,10-methylenetetrahydrofolate to 5,10-methenyltetrahydrofolate and then the hydrolysis of 5,10-methenyltetrahydrofolate to 10-formyltetrahydrofolate. In Sulfurihydrogenibium sp. (strain YO3AOP1), this protein is Bifunctional protein FolD.